The chain runs to 560 residues: Transcription termination factor 5, mitochondrial (560 aa).

The transit peptide at 1 to 23 (MLRNGQNQAQLLARSLGQLARGM) directs the protein to the mitochondrion. The interval 23–47 (MASSKRVSSKKEDLKPKLPKPPTVE) is disordered.

It belongs to the mTERF family. Probably binds to the mTTF-DNA complex.

Its subcellular location is the mitochondrion. Its function is as follows. Binds promoter DNA and regulates initiation of transcription. Regulates mitochondrial replication and transcription. Required for normal topology and maintenance of mitochondrial DNA (mtDNA) levels. Regulates mtDNA replication by re-activating replication after replication pausing. Likely to regulate replication pausing by coordinating with the mitochondrial termination factor mTTF which promotes replication pausing. Their function in replication pausing prevents unregulated replication that may occur for example by collisions between the machineries of DNA replication and transcription during mtDNA synthesis. This ensures the incorporation of RNA transcripts into replication intermediates at the replication fork and allows for proper fork progression. Possibly functions downstream of Dref which activates genes involved in mtDNA replication and maintenance. The polypeptide is Transcription termination factor 5, mitochondrial (Drosophila melanogaster (Fruit fly)).